Reading from the N-terminus, the 336-residue chain is Potassium channel subfamily K member 1 (336 aa).

Over 1 to 20 (MLQSLAGSSCVRLVERHRSA) the chain is Cytoplasmic. Residues 21–41 (WCFGFLVLGYLLYLVFGAVVF) traverse the membrane as a helical segment. The Extracellular portion of the chain corresponds to 42–103 (SSVELPYEDL…SNASGNWNWD (62 aa)). Asn-95 is a glycosylation site (N-linked (GlcNAc...) asparagine). Residues 104-116 (FTSALFFASTVLS) constitute an intramembrane region (helical). Residues 117-122 (TTGYGH) lie within the membrane without spanning it. Positions 117-122 (TTGYGH) are selectivity filter 1. Topologically, residues 123–132 (TVPLSDGGKA) are extracellular. Residues 133–156 (FCIIYSVIGIPFTLLFLTAVVQRV) form a helical membrane-spanning segment. The Cytoplasmic portion of the chain corresponds to 157-181 (TVHVTRRPVLYFHIRWGFSKQVVAI). A helical transmembrane segment spans residues 182-202 (VHAVLLGFVTVSCFFFIPAAV). Residues 203-211 (FSVLEDDWN) lie on the Extracellular side of the membrane. The segment at residues 212-224 (FLESFYFCFISLS) is an intramembrane region (helical). The tract at residues 225–230 (TIGLGD) is selectivity filter 2. Residues 225–231 (TIGLGDY) lie within the membrane without spanning it. At 232–243 (VPGEGYNQKFRE) the chain is on the extracellular side. Residues 244-267 (LYKIGITCYLLLGLIAMLVVLETF) form a helical membrane-spanning segment. The Cytoplasmic segment spans residues 268-336 (CELHELKKFR…PPYEDGSANH (69 aa)). Lys-274 is covalently cross-linked (Glycyl lysine isopeptide (Lys-Gly) (interchain with G-Cter in SUMO)). Positions 293–299 (IMEHDQL) are important for intracellular retention in recycling endosomes. A disordered region spans residues 310-336 (GLKEEQKQNEPFVASQSPPYEDGSANH). The residue at position 326 (Ser-326) is a Phosphoserine.

It belongs to the two pore domain potassium channel (TC 1.A.1.8) family. Homodimer; disulfide-linked. Heterodimer with KCNK2; disulfide-linked. In astrocytes, forms mostly heterodimeric potassium channels with KCNK2, with only a minor proportion of functional channels containing homodimeric KCNK1. Interacts with KCNK3 and KCNK9, forming functional heterodimeric channels. Interacts with GNG4. Identified in a complex with PSD and ARF6; interacts only with PSD that is bound to ARF6. Interacts with UBE2I. Post-translationally, sumoylation is controversial. Sumoylated by UBE2I. Not sumoylated when expressed in xenopus oocytes or mammalian cells. Sumoylation inactivates the channel, but does not interfere with expression at the cell membrane. Sumoylation of a single subunit is sufficient to silence the dimeric channel. Sumoylation of KCNK1 is sufficient to silence heterodimeric channels formed by KCNK1 and KCNK3 or KCNK9. Desumoylated by SENP1; this activates the channel. Desumoylated by SENP1; this strongly increases halothane-mediated activation of heterodimeric channels formed with KCNK9. SENP1 treatment has no effect. Detected in brain and in kidney cortex and medulla, especially at the renal brush border membranes of the proximal convoluted tubules, in distal tubules and on intercalated cells of the collecting duct. Detected in cerebellum granule neurons. Detected in astrocytes in hippocampus stratum radiatum. Highly expressed in the stria vascularis in the cochlea. Detected in neurons in Scarpa's ganglion in the inner ear, at nerve terminals in the crista ampullaris, in supporting cells and dark cells, but not in hair cells (at protein level). Detected in the brain cerebellar granule cell layer, amygdala, thalamus reticular nucleus, habenula, mesencephalic trigeminal neurons, neocortex and piriform cortex, and at lower levels in the olfactory bulb. Detected in Scarpa's ganglia and crista ampullaris in the inner ear.

It is found in the cell membrane. Its subcellular location is the recycling endosome. The protein resides in the apical cell membrane. It localises to the cytoplasmic vesicle. The protein localises to the perikaryon. It is found in the cell projection. Its subcellular location is the dendrite. The protein resides in the synaptic cell membrane. The enzyme catalyses K(+)(in) = K(+)(out). The catalysed reaction is NH4(+)(in) = NH4(+)(out). It catalyses the reaction Na(+)(in) = Na(+)(out). It carries out the reaction Rb(+)(in) = Rb(+)(out). The enzyme catalyses Cs(+)(in) = Cs(+)(out). The catalysed reaction is Li(+)(in) = Li(+)(out). It catalyses the reaction L-glutamate(out) = L-glutamate(in). It carries out the reaction chloride(in) = chloride(out). Inhibited by 100 uM quinine. Slightly inhibited by Ba(+). Activity is first increased and then decreased when the extracellular pH is lowered to 6.0. Its function is as follows. Ion channel that contributes to passive transmembrane potassium transport and to the regulation of the resting membrane potential in brain astrocytes, but also in kidney and in other tissues. Forms dimeric channels through which potassium ions pass in accordance with their electrochemical gradient. The channel is selective for K(+) ions at physiological potassium concentrations and at neutral pH, but becomes permeable to Na(+) at subphysiological K(+) levels and upon acidification of the extracellular medium. The homodimer has very low potassium channel activity, when expressed in heterologous systems, and can function as weakly inward rectifying potassium channel. Channel activity is modulated by activation of serotonin receptors. Heterodimeric channels containing KCNK1 and KCNK2 have much higher activity, and may represent the predominant form in astrocytes. Heterodimeric channels containing KCNK1 and KCNK3 or KCNK9 have much higher activity. Heterodimeric channels formed by KCNK1 and KCNK9 may contribute to halothane-sensitive currents. Mediates outward rectifying potassium currents in dentate gyrus granule cells and contributes to the regulation of their resting membrane potential. Contributes to the regulation of action potential firing in dentate gyrus granule cells and down-regulates their intrinsic excitability. Contributes to the regulation of the resting membrane potential of pancreatic beta cells. In astrocytes, the heterodimer formed by KCNK1 and KCNK2 is required for rapid glutamate release in response to activation of G-protein coupled receptors, such as F2R and CNR1. Required for normal ion and water transport in the kidney. The low channel activity of homodimeric KCNK1 may be due to sumoylation. The low channel activity may be due to rapid internalization from the cell membrane and retention in recycling endosomes. Permeable to monovalent cations with ion selectivity for K(+) &gt; Rb(+) &gt;&gt; NH4(+) &gt;&gt; Cs(+) = Na(+) = Li(+). This chain is Potassium channel subfamily K member 1, found in Rattus norvegicus (Rat).